Here is a 320-residue protein sequence, read N- to C-terminus: Ribose-phosphate pyrophosphokinase 1 (320 aa).

ATP contacts are provided by residues 39–41 and 98–99; these read DGE and RQ. Mg(2+) contacts are provided by histidine 132 and aspartate 173. Lysine 196 is an active-site residue. Residues arginine 198, aspartate 224, and 228 to 232 contribute to the D-ribose 5-phosphate site; that span reads DTAGT.

It belongs to the ribose-phosphate pyrophosphokinase family. Class I subfamily. In terms of assembly, homohexamer. Mg(2+) serves as cofactor.

Its subcellular location is the cytoplasm. It carries out the reaction D-ribose 5-phosphate + ATP = 5-phospho-alpha-D-ribose 1-diphosphate + AMP + H(+). It participates in metabolic intermediate biosynthesis; 5-phospho-alpha-D-ribose 1-diphosphate biosynthesis; 5-phospho-alpha-D-ribose 1-diphosphate from D-ribose 5-phosphate (route I): step 1/1. Involved in the biosynthesis of the central metabolite phospho-alpha-D-ribosyl-1-pyrophosphate (PRPP) via the transfer of pyrophosphoryl group from ATP to 1-hydroxyl of ribose-5-phosphate (Rib-5-P). This is Ribose-phosphate pyrophosphokinase 1 from Streptococcus pyogenes serotype M1.